The following is a 104-amino-acid chain: ATP synthase subunit c (104 aa).

2 helical membrane passes run L37–V57 and A83–V103.

It belongs to the ATPase C chain family. F-type ATPases have 2 components, F(1) - the catalytic core - and F(0) - the membrane proton channel. F(1) has five subunits: alpha(3), beta(3), gamma(1), delta(1), epsilon(1). F(0) has three main subunits: a(1), b(2) and c(10-14). The alpha and beta chains form an alternating ring which encloses part of the gamma chain. F(1) is attached to F(0) by a central stalk formed by the gamma and epsilon chains, while a peripheral stalk is formed by the delta and b chains.

It is found in the cell membrane. F(1)F(0) ATP synthase produces ATP from ADP in the presence of a proton or sodium gradient. F-type ATPases consist of two structural domains, F(1) containing the extramembraneous catalytic core and F(0) containing the membrane proton channel, linked together by a central stalk and a peripheral stalk. During catalysis, ATP synthesis in the catalytic domain of F(1) is coupled via a rotary mechanism of the central stalk subunits to proton translocation. Its function is as follows. Key component of the F(0) channel; it plays a direct role in translocation across the membrane. A homomeric c-ring of between 10-14 subunits forms the central stalk rotor element with the F(1) delta and epsilon subunits. This chain is ATP synthase subunit c, found in Mesoplasma florum (strain ATCC 33453 / NBRC 100688 / NCTC 11704 / L1) (Acholeplasma florum).